We begin with the raw amino-acid sequence, 280 residues long: Lacto-N-neotetraose biosynthesis glycosyltransferase LgtE (280 aa).

The protein belongs to the glycosyltransferase 25 family.

It functions in the pathway glycan metabolism; lacto-N-neotetraose biosynthesis. It participates in bacterial outer membrane biogenesis; lipooligosaccharide biosynthesis. Functionally, adds the first galactose to the lacto-N-tetraose chain in lipooligosaccharide (LOS). The chain is Lacto-N-neotetraose biosynthesis glycosyltransferase LgtE (lgtE) from Neisseria gonorrhoeae.